The following is a 526-amino-acid chain: MNRNRKGHDLENIEHRFTDEDLAGLKEQKLFNGKWIILEKKEKRGAAYCYLVCDKPCKKFGILYLEIGEDNVTTIANQVDFYHQQSSLGYSHRFSALIDAGIINNHVFFMVVRIRAGPTLHDLLKCLSSDKMSVTTASFLAVDMISAIEILSASGWVLRNFDSKQWMLDIKTRQFYLADATDITVSSDKRHRAIDEIHLRTAESIDLHWKTGDLIYAPRSFVDRDQSHRMTELDMMEMMLYVLYDWTHGKLPWKSSKSRERIMEMKELFIENLQKEPEETNKVEQQIDVDVWFDIALRNFAKHLKVAKEEQEKLEKLPVRGGAWCPKGPRAGAQISTVNYRGIIDDFYKIVCSGRPAWALHWRDVMLDWDRKLENTPETSKMFEAYEKHQRSLEISEEWERLQATREHYTVMKNHTETEMAKNQAAIVEYLMPEEEAKEEPIDKKKDPEEEAAAAVVGKKRRGRKPKKKDDPKMELKDEVKDLKDFVVEESTSASSSAPKKRPCCSSGSPLKSSGGRRRGCEIRRK.

Positions 436-526 (EAKEEPIDKK…RRRGCEIRRK (91 aa)) are disordered. The span at 439–448 (EEPIDKKKDP) shows a compositional bias: basic and acidic residues. A compositionally biased stretch (basic residues) spans 458-467 (GKKRRGRKPK). Over residues 468–487 (KKDDPKMELKDEVKDLKDFV) the composition is skewed to basic and acidic residues. A compositionally biased stretch (low complexity) spans 489–498 (EESTSASSSA).

Expressed in male and female germ cells.

Its subcellular location is the nucleus. It is found in the chromosome. Its function is as follows. Nuclear factor required for the production of piwi-interacting RNA (piRNA) precursors. Specifically required for piRNAs produced from loci associated with the Ruby motif. Promotes binding of the transcription factor snpc-4 at piRNA genomic clusters. Required for normal fertility. The chain is piRNA biogenesis factor prde-1 from Caenorhabditis elegans.